The primary structure comprises 146 residues: 3-dehydroquinate dehydratase (146 aa).

Residue tyrosine 23 is the Proton acceptor of the active site. Substrate is bound by residues asparagine 75, histidine 81, and aspartate 88. The active-site Proton donor is histidine 101. Residues 102-103 (LS) and arginine 112 contribute to the substrate site.

Belongs to the type-II 3-dehydroquinase family. In terms of assembly, homododecamer.

It catalyses the reaction 3-dehydroquinate = 3-dehydroshikimate + H2O. It participates in metabolic intermediate biosynthesis; chorismate biosynthesis; chorismate from D-erythrose 4-phosphate and phosphoenolpyruvate: step 3/7. In terms of biological role, catalyzes a trans-dehydration via an enolate intermediate. This is 3-dehydroquinate dehydratase from Marinobacter nauticus (strain ATCC 700491 / DSM 11845 / VT8) (Marinobacter aquaeolei).